We begin with the raw amino-acid sequence, 444 residues long: Methylenetetrahydrofolate--tRNA-(uracil-5-)-methyltransferase TrmFO (444 aa).

FAD is bound at residue 9–14 (GAGMAG).

This sequence belongs to the MnmG family. TrmFO subfamily. The cofactor is FAD.

It is found in the cytoplasm. The catalysed reaction is uridine(54) in tRNA + (6R)-5,10-methylene-5,6,7,8-tetrahydrofolate + NADH + H(+) = 5-methyluridine(54) in tRNA + (6S)-5,6,7,8-tetrahydrofolate + NAD(+). It carries out the reaction uridine(54) in tRNA + (6R)-5,10-methylene-5,6,7,8-tetrahydrofolate + NADPH + H(+) = 5-methyluridine(54) in tRNA + (6S)-5,6,7,8-tetrahydrofolate + NADP(+). In terms of biological role, catalyzes the folate-dependent formation of 5-methyl-uridine at position 54 (M-5-U54) in all tRNAs. This Cereibacter sphaeroides (strain ATCC 17029 / ATH 2.4.9) (Rhodobacter sphaeroides) protein is Methylenetetrahydrofolate--tRNA-(uracil-5-)-methyltransferase TrmFO.